The chain runs to 109 residues: Oncomodulin (109 aa).

The residue at position 2 (Ser-2) is an N-acetylserine. 2 consecutive EF-hand domains span residues 39–74 (MSAS…FQSD) and 78–109 (LTES…MVHS). Ca(2+) is bound by residues Asp-52, Asp-54, Ser-56, Tyr-58, Glu-63, Asp-91, Asp-93, Asp-95, Lys-97, and Glu-102.

It belongs to the parvalbumin family. Found in tumor tissues and not detected in normal tissues.

In terms of biological role, has some calmodulin-like activity with respect to enzyme activation and growth regulation. Binds two calcium ions. This is Oncomodulin (Ocm) from Rattus norvegicus (Rat).